A 208-amino-acid polypeptide reads, in one-letter code: MAIERYFIKEGVREMLIDEYLEKELRRAGYGGIDIKKTPLGTKVIIFAANPGYVIGRGGRRIRELTRILERQFGLENPQIEVEEIKNPYLNAKVQAVRLAQALERGVHFRRAAYAAIRAIMRNGARGVEIRISGKLTGERAKSVRFYQGYLAKVGNPAETLVSKGYAQALLKLGVIGVKVSIMPPDAKLPDEIEVIEKPIQEEEVSEE.

Residues 17-86 (IDEYLEKELR…NPQIEVEEIK (70 aa)) enclose the KH type-2 domain.

This sequence belongs to the universal ribosomal protein uS3 family. As to quaternary structure, part of the 30S ribosomal subunit.

Binds the lower part of the 30S subunit head. The sequence is that of Small ribosomal subunit protein uS3 from Thermococcus onnurineus (strain NA1).